The following is a 200-amino-acid chain: 3-isopropylmalate dehydratase small subunit (200 aa).

The protein belongs to the LeuD family. LeuD type 1 subfamily. In terms of assembly, heterodimer of LeuC and LeuD.

The enzyme catalyses (2R,3S)-3-isopropylmalate = (2S)-2-isopropylmalate. The protein operates within amino-acid biosynthesis; L-leucine biosynthesis; L-leucine from 3-methyl-2-oxobutanoate: step 2/4. Catalyzes the isomerization between 2-isopropylmalate and 3-isopropylmalate, via the formation of 2-isopropylmaleate. This Aliivibrio fischeri (strain MJ11) (Vibrio fischeri) protein is 3-isopropylmalate dehydratase small subunit.